Here is a 416-residue protein sequence, read N- to C-terminus: Glutamyl-tRNA reductase (416 aa).

Residues 50-53 (TCNR), Ser109, 114-116 (EPQ), and Gln120 each bind substrate. Residue Cys51 is the Nucleophile of the active site. NADP(+) is bound at residue 189 to 194 (GAGEMI).

It belongs to the glutamyl-tRNA reductase family. As to quaternary structure, homodimer.

It catalyses the reaction (S)-4-amino-5-oxopentanoate + tRNA(Glu) + NADP(+) = L-glutamyl-tRNA(Glu) + NADPH + H(+). It functions in the pathway porphyrin-containing compound metabolism; protoporphyrin-IX biosynthesis; 5-aminolevulinate from L-glutamyl-tRNA(Glu): step 1/2. Functionally, catalyzes the NADPH-dependent reduction of glutamyl-tRNA(Glu) to glutamate 1-semialdehyde (GSA). The sequence is that of Glutamyl-tRNA reductase from Vesicomyosocius okutanii subsp. Calyptogena okutanii (strain HA).